The sequence spans 399 residues: Elongation factor Tu (399 aa).

A tr-type G domain is found at 10–209 (KPHVNIGTIG…EVDAYIPTPE (200 aa)). Residues 19–26 (GHVDHGKT) form a G1 region. 19-26 (GHVDHGKT) is a GTP binding site. Thr-26 lines the Mg(2+) pocket. The interval 60–64 (GITIA) is G2. The interval 81 to 84 (DCPG) is G3. GTP-binding positions include 81–85 (DCPGH) and 136–139 (NKQD). The tract at residues 136–139 (NKQD) is G4. The tract at residues 174 to 176 (SAL) is G5.

The protein belongs to the TRAFAC class translation factor GTPase superfamily. Classic translation factor GTPase family. EF-Tu/EF-1A subfamily. In terms of assembly, monomer.

Its subcellular location is the cytoplasm. The catalysed reaction is GTP + H2O = GDP + phosphate + H(+). Its function is as follows. GTP hydrolase that promotes the GTP-dependent binding of aminoacyl-tRNA to the A-site of ribosomes during protein biosynthesis. This Helicobacter pylori (strain G27) protein is Elongation factor Tu.